Here is an 89-residue protein sequence, read N- to C-terminus: MSLSVEAKAKIVSEFGRGTNDSGSTEVQVALLTAQINHLQGHFAEHKKDHHSRRGLLRMVSQRRKLLDYLKRKDVARYTALIERLGLRR.

It belongs to the universal ribosomal protein uS15 family. Part of the 30S ribosomal subunit. Forms a bridge to the 50S subunit in the 70S ribosome, contacting the 23S rRNA.

One of the primary rRNA binding proteins, it binds directly to 16S rRNA where it helps nucleate assembly of the platform of the 30S subunit by binding and bridging several RNA helices of the 16S rRNA. In terms of biological role, forms an intersubunit bridge (bridge B4) with the 23S rRNA of the 50S subunit in the ribosome. This Enterobacter sp. (strain 638) protein is Small ribosomal subunit protein uS15.